We begin with the raw amino-acid sequence, 1945 residues long: Rho GTPase-activating protein 21 (1945 aa).

A disordered region spans residues 26 to 53 (CEVSKNKDGKDQGEPVSPSEDEPFSWPG). Basic and acidic residues predominate over residues 29-38 (SKNKDGKDQG). 2 positions are modified to phosphoserine: S42 and S63. The PDZ domain maps to 56–165 (TVMLKRTSQG…TLELSVMPKD (110 aa)). Disordered stretches follow at residues 210-229 (TAQPVETCPPDSLPNKQQTS) and 326-365 (HQTTGSRSLEPSGILLKSGNYSGHSEGISSSRSQAVDSPP). Positions 347–358 (SGHSEGISSSRS) are enriched in low complexity. A Phosphoserine modification is found at S454. A compositionally biased stretch (polar residues) spans 499–512 (EATATVNSESQIPD). The tract at residues 499 to 519 (EATATVNSESQIPDSNGERKQ) is disordered. Omega-N-methylarginine is present on residues R549 and R569. Disordered regions lie at residues 573–647 (PVSQ…RPVN) and 674–702 (EVSSCLPGTSAKTSPQLSENLGTSDLELP). The segment covering 589–600 (SNRNFPTTTGVS) has biased composition (polar residues). A phosphoserine mark is found at S610 and S619. Positions 674-696 (EVSSCLPGTSAKTSPQLSENLGT) are enriched in polar residues. Residue T741 is modified to Phosphothreonine. Phosphoserine occurs at positions 851, 856, and 875. Disordered regions lie at residues 852–879 (HDQESVGPPSLDGQHSSKTERSKSYDEG) and 902–921 (ITDSQKSSEDSGSRKGSSSE). Basic and acidic residues predominate over residues 866–879 (HSSKTERSKSYDEG). Position 876 is a phosphotyrosine (Y876). 5 positions are modified to phosphoserine: S918, S920, S948, S1093, and S1109. Residues 924-1091 (SDAAREGWLQ…AKSEPKTQSP (168 aa)) form an interaction with ARF1 and ARF6 region. Residues 925 to 1034 (DAAREGWLQF…WIKTIQESSN (110 aa)) form the PH domain. The interval 1080–1120 (LGAKSEPKTQSPHSPKEESERKLLSKDDTSPPKDKGTWRRG) is disordered. The segment covering 1093 to 1116 (SPKEESERKLLSKDDTSPPKDKGT) has biased composition (basic and acidic residues). The Rho-GAP domain maps to 1141–1333 (VRLDDCPPAH…TLIQHHDWFF (193 aa)). 4 disordered regions span residues 1373-1396 (PGDVSDSATSDSAKSKGSWGSGKD), 1412-1632 (SRKR…PVFP), 1649-1794 (ARVS…LGGH), and 1846-1945 (RTSA…ETPP). A compositionally biased stretch (low complexity) spans 1377-1395 (SDSATSDSAKSKGSWGSGK). Residues S1412, S1426, and S1427 each carry the phosphoserine modification. Composition is skewed to basic and acidic residues over residues 1435 to 1457 (FFKKENTEQSHSEIKEESKRESE) and 1471 to 1488 (SNTKKDSGTTKEEKKIPW). K1438 participates in a covalent cross-link: Glycyl lysine isopeptide (Lys-Gly) (interchain with G-Cter in SUMO). T1504 is subject to Phosphothreonine. Low complexity-rich tracts occupy residues 1531–1556 (SDSGTLLSTSSQASLLRSSTKKSTSP) and 1569–1589 (TTTSDYSTTSSTTYLTSLDSS). The interval 1579 to 1848 (STTYLTSLDS…WLARERVRTS (270 aa)) is interaction with CTNNA1. The span at 1590–1599 (RLSPEVQSVA) shows a compositional bias: polar residues. A compositionally biased stretch (basic and acidic residues) spans 1611–1621 (SELVSEGRPVE). S1656 carries the post-translational modification Phosphoserine. 2 stretches are compositionally biased toward polar residues: residues 1658 to 1681 (GSEASCTEGSLTPSLDSRRQQFSS) and 1729 to 1738 (STGSLLTPSR). T1669 carries the post-translational modification Phosphothreonine. Position 1729 is a phosphoserine (S1729). The segment covering 1739–1757 (SESEKQEATWKTKIADRLK) has biased composition (basic and acidic residues). A compositionally biased stretch (basic residues) spans 1782-1792 (RKNIKRRHTLG). The span at 1871 to 1882 (PISTHSPPSQQP) shows a compositional bias: polar residues. A compositionally biased stretch (low complexity) spans 1887 to 1896 (AATSTLASTS). At T1902 the chain carries Phosphothreonine. The residue at position 1906 (S1906) is a Phosphoserine. Positions 1907 to 1927 (PDQINRESFQNMSQNASSTAN) are enriched in polar residues. Residues 1932 to 1945 (KQSESPDTKAETPP) show a composition bias toward basic and acidic residues.

Interacts with CTNNA1. Interacts with GTP-bound ARF1 and probably ARF6. Post-translationally, sumoylated with SUMO2 and SUMO3 in proliferating lymphocytes.

The protein localises to the golgi apparatus membrane. It localises to the cell junction. The protein resides in the cytoplasmic vesicle membrane. It is found in the cytoplasm. Its subcellular location is the cytoskeleton. Functions as a GTPase-activating protein (GAP) for RHOA and CDC42. Downstream partner of ARF1 which may control Golgi apparatus structure and function. Also required for CTNNA1 recruitment to adherens junctions. The polypeptide is Rho GTPase-activating protein 21 (Mus musculus (Mouse)).